A 494-amino-acid chain; its full sequence is Serine/threonine-protein kinase cst-1 (494 aa).

Residues 1–27 form a disordered region; that stretch reads MPPSTDSSRRNSEEGFSDGFKLDSSAL. In terms of domain architecture, Protein kinase spans 35-286; sequence FDIVGKLGEG…ALRLCEHTFI (252 aa). Residues 41 to 49 and lysine 64 contribute to the ATP site; that span reads LGEGSYGSV. The active-site Proton acceptor is the aspartate 154. Residues 364 to 413 are disordered; that stretch reads IPKSAYGSSRNNGSPRVQPPGHTASACDPSNNPPFAEEGTGPNFQIGTSE. Positions 369-378 are enriched in polar residues; it reads YGSSRNNGSP. Residues 443-490 enclose the SARAH domain; that stretch reads FEFLRNITLDELIRRKESLDSEMEEEIRELQRRYKTKRQPILDVIEIK.

Belongs to the protein kinase superfamily. STE Ser/Thr protein kinase family. STE20 subfamily. It depends on Mg(2+) as a cofactor. Proteolytically cleaved by caspase-3 during apoptosis which results in kinase activation.

The enzyme catalyses L-seryl-[protein] + ATP = O-phospho-L-seryl-[protein] + ADP + H(+). It catalyses the reaction L-threonyl-[protein] + ATP = O-phospho-L-threonyl-[protein] + ADP + H(+). Functionally, serine/threonine-protein kinase which extends lifespan and delays tissue aging, probably by activating daf-16. This is Serine/threonine-protein kinase cst-1 (cst-1) from Caenorhabditis briggsae.